We begin with the raw amino-acid sequence, 1668 residues long: Probable histone acetyltransferase HAC-like 1 (1668 aa).

Disordered regions lie at residues Met-1–Leu-34, Gln-459–Gly-493, and Lys-528–Gln-551. Residues Gly-11–Val-23 are compositionally biased toward polar residues. The span at Gln-459 to Ser-469 shows a compositional bias: low complexity. Composition is skewed to polar residues over residues Ile-470–Glu-491 and Leu-536–Gln-551. The segment at Ala-651–Ala-732 adopts a TAZ-type 1 zinc-finger fold. The span at Lys-886–Ala-899 shows a compositional bias: basic and acidic residues. The segment at Lys-886–Lys-912 is disordered. Residues Asn-900–Lys-909 are compositionally biased toward polar residues. Residues His-1002–Glu-1079 form a PHD-type zinc finger. Residues Val-1094–Ala-1530 enclose the CBP/p300-type HAT domain. Acetyl-CoA is bound by residues Leu-1217 to Ser-1219, Arg-1236 to Thr-1237, and Trp-1292. Positions Gly-1342–Lys-1365 form a coiled coil. The segment at His-1412–Leu-1475 adopts a ZZ-type zinc-finger fold. Residues Cys-1417, Cys-1420, Cys-1432, Cys-1435, Cys-1441, Cys-1444, His-1457, and His-1465 each contribute to the Zn(2+) site. The segment at Glu-1553–Leu-1634 adopts a TAZ-type 2 zinc-finger fold. Residues Arg-1630–Arg-1650 adopt a coiled-coil conformation.

It is found in the nucleus. The enzyme catalyses L-lysyl-[protein] + acetyl-CoA = N(6)-acetyl-L-lysyl-[protein] + CoA + H(+). Functionally, acetyltransferase enzyme. Acetylates histones, giving a specific tag for transcriptional activation. This is Probable histone acetyltransferase HAC-like 1 from Oryza sativa subsp. japonica (Rice).